The chain runs to 399 residues: DNA primase DnaG (399 aa).

In terms of domain architecture, Toprim spans 182 to 268; that stretch reads DAIIVVEGRA…EVEDLTQKEI (87 aa). The Mg(2+) site is built by Glu-188, Asp-230, and Asp-232.

The protein belongs to the archaeal DnaG primase family. In terms of assembly, forms a ternary complex with MCM helicase and DNA. Component of the archaeal exosome complex. Mg(2+) is required as a cofactor.

It carries out the reaction ssDNA + n NTP = ssDNA/pppN(pN)n-1 hybrid + (n-1) diphosphate.. Functionally, RNA polymerase that catalyzes the synthesis of short RNA molecules used as primers for DNA polymerase during DNA replication. Also part of the exosome, which is a complex involved in RNA degradation. Acts as a poly(A)-binding protein that enhances the interaction between heteromeric, adenine-rich transcripts and the exosome. This is DNA primase DnaG from Archaeoglobus fulgidus (strain ATCC 49558 / DSM 4304 / JCM 9628 / NBRC 100126 / VC-16).